We begin with the raw amino-acid sequence, 106 residues long: Nucleoid-associated protein RPA0616 (106 aa).

This sequence belongs to the YbaB/EbfC family. In terms of assembly, homodimer.

Its subcellular location is the cytoplasm. The protein localises to the nucleoid. Its function is as follows. Binds to DNA and alters its conformation. May be involved in regulation of gene expression, nucleoid organization and DNA protection. The chain is Nucleoid-associated protein RPA0616 from Rhodopseudomonas palustris (strain ATCC BAA-98 / CGA009).